The primary structure comprises 298 residues: Lipoyl synthase (298 aa).

Residues cysteine 40, cysteine 45, cysteine 51, cysteine 67, cysteine 71, cysteine 74, and serine 280 each coordinate [4Fe-4S] cluster. Positions alanine 53–serine 269 constitute a Radical SAM core domain.

This sequence belongs to the radical SAM superfamily. Lipoyl synthase family. The cofactor is [4Fe-4S] cluster.

Its subcellular location is the cytoplasm. It catalyses the reaction [[Fe-S] cluster scaffold protein carrying a second [4Fe-4S](2+) cluster] + N(6)-octanoyl-L-lysyl-[protein] + 2 oxidized [2Fe-2S]-[ferredoxin] + 2 S-adenosyl-L-methionine + 4 H(+) = [[Fe-S] cluster scaffold protein] + N(6)-[(R)-dihydrolipoyl]-L-lysyl-[protein] + 4 Fe(3+) + 2 hydrogen sulfide + 2 5'-deoxyadenosine + 2 L-methionine + 2 reduced [2Fe-2S]-[ferredoxin]. The protein operates within protein modification; protein lipoylation via endogenous pathway; protein N(6)-(lipoyl)lysine from octanoyl-[acyl-carrier-protein]. In terms of biological role, catalyzes the radical-mediated insertion of two sulfur atoms into the C-6 and C-8 positions of the octanoyl moiety bound to the lipoyl domains of lipoate-dependent enzymes, thereby converting the octanoylated domains into lipoylated derivatives. In Geobacillus thermodenitrificans (strain NG80-2), this protein is Lipoyl synthase.